The following is a 134-amino-acid chain: Complexin-2 (134 aa).

Positions 1-114 (MDFVMKQALG…CGDEDEEDEE (114 aa)) are disordered. Positions 15–85 (DMGKMLGGDE…EEKEAEEKAA (71 aa)) are enriched in basic and acidic residues. Positions 29 to 84 (DAQKKEEERQEALRQQEDERKQKHIRMETEREKVRQQIRDKYGLKKKEEKEAEEKA) form a coiled coil.

Belongs to the complexin/synaphin family. As to quaternary structure, binds to the SNARE core complex containing SNAP25, VAMP2 and STX1A. Nervous system. Present in electric organ (at protein level).

The protein resides in the cytoplasm. It is found in the cytosol. It localises to the presynapse. The protein localises to the nucleus. Its subcellular location is the perikaryon. In terms of biological role, positively regulates a late step in synaptic vesicle exocytosis. The sequence is that of Complexin-2 from Narke japonica (Japanese sleeper ray).